Consider the following 163-residue polypeptide: Cyanate hydratase (163 aa).

Catalysis depends on residues arginine 103, glutamate 106, and serine 129.

It belongs to the cyanase family.

The enzyme catalyses cyanate + hydrogencarbonate + 3 H(+) = NH4(+) + 2 CO2. Functionally, catalyzes the reaction of cyanate with bicarbonate to produce ammonia and carbon dioxide. The polypeptide is Cyanate hydratase (Ajellomyces capsulatus (strain G186AR / H82 / ATCC MYA-2454 / RMSCC 2432) (Darling's disease fungus)).